The sequence spans 277 residues: Diaminopimelate epimerase (277 aa).

Substrate is bound by residues N13, Q46, and N66. The active-site Proton donor is C75. Residues 76–77, N160, N193, and 211–212 each bind substrate; these read GN and ER. Residue C220 is the Proton acceptor of the active site. 221-222 provides a ligand contact to substrate; sequence GS.

This sequence belongs to the diaminopimelate epimerase family. Homodimer.

The protein localises to the cytoplasm. It catalyses the reaction (2S,6S)-2,6-diaminopimelate = meso-2,6-diaminopimelate. Its pathway is amino-acid biosynthesis; L-lysine biosynthesis via DAP pathway; DL-2,6-diaminopimelate from LL-2,6-diaminopimelate: step 1/1. Functionally, catalyzes the stereoinversion of LL-2,6-diaminopimelate (L,L-DAP) to meso-diaminopimelate (meso-DAP), a precursor of L-lysine and an essential component of the bacterial peptidoglycan. The chain is Diaminopimelate epimerase from Legionella pneumophila subsp. pneumophila (strain Philadelphia 1 / ATCC 33152 / DSM 7513).